The following is a 64-amino-acid chain: UPF0434 protein Oant_3286 (64 aa).

It belongs to the UPF0434 family.

The sequence is that of UPF0434 protein Oant_3286 from Brucella anthropi (strain ATCC 49188 / DSM 6882 / CCUG 24695 / JCM 21032 / LMG 3331 / NBRC 15819 / NCTC 12168 / Alc 37) (Ochrobactrum anthropi).